A 409-amino-acid chain; its full sequence is Pyrophosphate--fructose 6-phosphate 1-phosphotransferase (409 aa).

G14 is a diphosphate binding site. D123 provides a ligand contact to Mg(2+). Substrate-binding positions include 151 to 153 (TID), 196 to 198 (MGR), E268, and 325 to 328 (YFAR). The active-site Proton acceptor is the D153.

This sequence belongs to the phosphofructokinase type A (PFKA) family. PPi-dependent PFK group II subfamily. Clade 'P' sub-subfamily. Homotetramer. Mg(2+) is required as a cofactor.

Its subcellular location is the cytoplasm. It catalyses the reaction beta-D-fructose 6-phosphate + diphosphate = beta-D-fructose 1,6-bisphosphate + phosphate + H(+). The protein operates within carbohydrate degradation; glycolysis; D-glyceraldehyde 3-phosphate and glycerone phosphate from D-glucose: step 3/4. Non-allosteric. Functionally, catalyzes the phosphorylation of D-fructose 6-phosphate, the first committing step of glycolysis. Uses inorganic phosphate (PPi) as phosphoryl donor instead of ATP like common ATP-dependent phosphofructokinases (ATP-PFKs), which renders the reaction reversible, and can thus function both in glycolysis and gluconeogenesis. Consistently, PPi-PFK can replace the enzymes of both the forward (ATP-PFK) and reverse (fructose-bisphosphatase (FBPase)) reactions. The polypeptide is Pyrophosphate--fructose 6-phosphate 1-phosphotransferase (Methylotuvimicrobium alcaliphilum (strain DSM 19304 / NCIMB 14124 / VKM B-2133 / 20Z) (Methylomicrobium alcaliphilum)).